The chain runs to 306 residues: Agmatinase (306 aa).

Residues His-126, Asp-149, His-151, Asp-153, Asp-230, and Asp-232 each contribute to the Mn(2+) site.

The protein belongs to the arginase family. Agmatinase subfamily. Requires Mn(2+) as cofactor.

The enzyme catalyses agmatine + H2O = urea + putrescine. The protein operates within amine and polyamine biosynthesis; putrescine biosynthesis via agmatine pathway; putrescine from agmatine: step 1/1. Functionally, catalyzes the formation of putrescine from agmatine. This Citrobacter koseri (strain ATCC BAA-895 / CDC 4225-83 / SGSC4696) protein is Agmatinase.